The following is a 1361-amino-acid chain: Protein CFT1 (1361 aa).

A disordered region spans residues 455–493; it reads AAYNNEDDDDDDDDFNLYSDEENDQVNNKNDRTFGTNES. Positions 459–478 are enriched in acidic residues; sequence NEDDDDDDDDFNLYSDEEND. Positions 479-493 are enriched in polar residues; sequence QVNNKNDRTFGTNES.

The protein belongs to the CFT1 family.

It is found in the nucleus. Its function is as follows. RNA-binding component of the cleavage and polyadenylation factor (CPF) complex, which plays a key role in polyadenylation-dependent pre-mRNA 3'-end formation and cooperates with cleavage factors including the CFIA complex and NAB4/CFIB. Involved in poly(A) site recognition. May be involved in coupling transcription termination and mRNA 3'-end formation. The chain is Protein CFT1 (CFT1) from Candida glabrata (strain ATCC 2001 / BCRC 20586 / JCM 3761 / NBRC 0622 / NRRL Y-65 / CBS 138) (Yeast).